We begin with the raw amino-acid sequence, 490 residues long: Sphingomyelinase (490 aa).

An N-terminal signal peptide occupies residues 1–31 (MDYAKRIGQVGALAVVLGVGAAVTTHAIGSA). Residues 30-49 (SAAPTDPSSSSTDSPVDACS) are disordered. At 32–136 (APTDPSSSST…FDACDPDGNR (105 aa)) the chain is on the periplasmic side. The chain crosses the membrane as a beta stranded span at residues 137–145 (MTFAVRERG). Over 146–161 (APGGPQHGIVTVDQRT) the chain is Extracellular. A beta stranded membrane pass occupies residues 162 to 168 (ASFIYTA). The Periplasmic segment spans residues 169 to 171 (DPG). The chain crosses the membrane as a beta stranded span at residues 172-182 (FVGTDTFSVNV). At 183 to 187 (SDDTS) the chain is on the extracellular side. The beta stranded transmembrane segment at 188-196 (LHVHGLAGY) threads the bilayer. The Periplasmic portion of the chain corresponds to 197 to 204 (LGPFHGHD). Residues 205–213 (DVATVTVFV) form a beta stranded membrane-spanning segment. The Extracellular segment spans residues 214-490 (GNTPTDTISG…HYVADNVAVR (277 aa)).

It belongs to the SpmT family.

The protein localises to the cell outer membrane. The enzyme catalyses a sphingomyelin + H2O = phosphocholine + an N-acylsphing-4-enine + H(+). Catalyzes the cleavage of sphingomyelin, a major lipid in eukaryotic cells, into ceramide and phosphocholine, which are then utilized by M.bovis as carbon, nitrogen and phosphorus sources, respectively. Thus, enables M.bovis to utilize sphingomyelin as a source of several essential nutrients for intracellular growth during infection. Furthermore, lyses erythrocytes and constitutes a hemolytic factor. This Mycobacterium bovis (strain ATCC BAA-935 / AF2122/97) protein is Sphingomyelinase.